The primary structure comprises 391 residues: uncharacterized protein (391 aa).

2 WD repeats span residues 137-179 (VNDI…PILA) and 182-222 (PLSS…SAEE).

The protein resides in the cytoplasm. Its subcellular location is the nucleus. This is an uncharacterized protein from Schizosaccharomyces pombe (strain 972 / ATCC 24843) (Fission yeast).